The following is a 1560-amino-acid chain: Tenascin-N (1560 aa).

The N-terminal stretch at 1-26 (MGLWGMLAFPLGFLLASVLLVASAPA) is a signal peptide. EGF-like domains are found at residues 167 to 198 (DQPT…VDCA), 199 to 229 (YAAC…EDCS), and 230 to 260 (EQRC…PDCS). 9 disulfides stabilise this stretch: Cys-171/Cys-181, Cys-175/Cys-186, Cys-188/Cys-197, Cys-202/Cys-212, Cys-206/Cys-217, Cys-219/Cys-228, Cys-233/Cys-243, Cys-237/Cys-248, and Cys-250/Cys-259. 12 consecutive Fibronectin type-III domains span residues 264–353 (APQG…DLAV), 354–444 (VGTA…TEID), 445–532 (GPTN…TEID), 533–622 (SPEN…IDSP), 623–706 (KNLV…APTD), 709–798 (GPKN…IDSP), 799–882 (KNLV…APTD), 885–970 (GPKN…APTD), 973–1062 (SPKN…IDSP), 1063–1144 (KNLV…TKAP), 1149–1238 (SPKN…IDPP), and 1239–1325 (RNLR…VDAR). 2 disordered regions span residues 868–888 (GTQE…GPKN) and 1044–1063 (GARE…DSPK). The span at 1044-1061 (GARESKKANTEGHTDIDS) shows a compositional bias: basic and acidic residues. The Fibrinogen C-terminal domain occupies 1323–1540 (DARFPHPSDC…YVELKIRPFG (218 aa)). Asn-1411 is a glycosylation site (N-linked (GlcNAc...) asparagine).

Belongs to the tenascin family. Homohexamer. Highest expression in kidney followed by spleen and brain. In brain, highest expression is found in hippocampus, cerebellum and olfactory bulb. Expressed in aortic valve, corneal limbus. Expressed in ribs periosteum. During a fracture repair process, expression increases in cells of newly formed perichondrium/peristeum surrounding the cartalaginous callus.

It is found in the secreted. Its subcellular location is the extracellular space. The protein localises to the extracellular matrix. Extracellular matrix protein that seems to be a ligand for ITGA8:ITGB1, ITGAV:ITGB1 and ITGA4:ITGB1. Involved in neurite outgrowth and cell migration in hippocampal explants. During endochondral bone formation, inhibits proliferation and differentiation of proteoblasts mediated by canonical WNT signaling. In tumors, stimulates angiogenesis by elongation, migration and sprouting of endothelial cells. Expressed in most mammary tumors, may facilitate tumorigenesis by supporting the migratory behavior of breast cancer cells. This Mus musculus (Mouse) protein is Tenascin-N.